The primary structure comprises 187 residues: Putative protein YbeM (187 aa).

Positions methionine 1 to proline 163 constitute a CN hydrolase domain.

The protein belongs to the carbon-nitrogen hydrolase superfamily. NIT1/NIT2 family.

Functionally, pseudogene resulting from a nucleotide deletion that introduces a premature stop codon at position 66. This is the C-terminal fragment. The intact protein (AC A0A140NCB4) hydrolyzes deaminated glutathione (dGSH, 2-oxoglutaramate) to alpha-ketoglutarate (alpha-KG) and cysteinylglycine, has less activity against alpha-ketoglutaramate (a-KGM) and no activity on glutathione or L-glutamine. May function as a metabolite repair enzyme. The sequence is that of Putative protein YbeM (ybeM) from Escherichia coli (strain K12).